The following is a 301-amino-acid chain: ATP synthase gamma chain (301 aa).

It belongs to the ATPase gamma chain family. As to quaternary structure, F-type ATPases have 2 components, CF(1) - the catalytic core - and CF(0) - the membrane proton channel. CF(1) has five subunits: alpha(3), beta(3), gamma(1), delta(1), epsilon(1). CF(0) has three main subunits: a, b and c.

The protein resides in the cell inner membrane. Functionally, produces ATP from ADP in the presence of a proton gradient across the membrane. The gamma chain is believed to be important in regulating ATPase activity and the flow of protons through the CF(0) complex. The chain is ATP synthase gamma chain from Helicobacter acinonychis (strain Sheeba).